A 153-amino-acid polypeptide reads, in one-letter code: Cytochrome c-type biogenesis protein CcmE (153 aa).

The Cytoplasmic segment spans residues 1-8 (MMTPRQRR). Residues 9 to 29 (MTWVALMVAGVSLAAFFALTA) form a helical; Signal-anchor for type II membrane protein membrane-spanning segment. Over 30–153 (FQKNLLYFYT…PADYSEYRKK (124 aa)) the chain is Periplasmic. Heme contacts are provided by His-124 and Tyr-128. The disordered stretch occupies residues 134–153 (AESLKKNGGLPADYSEYRKK).

The protein belongs to the CcmE/CycJ family.

It is found in the cell inner membrane. In terms of biological role, heme chaperone required for the biogenesis of c-type cytochromes. Transiently binds heme delivered by CcmC and transfers the heme to apo-cytochromes in a process facilitated by CcmF and CcmH. This is Cytochrome c-type biogenesis protein CcmE from Methylococcus capsulatus (strain ATCC 33009 / NCIMB 11132 / Bath).